The chain runs to 452 residues: Digeranylgeranylglycerophospholipid reductase (452 aa).

FAD contacts are provided by residues 15–16, 35–36, and 45–50; these read FA, DS, and KPCGDA. Histidine 55 provides a ligand contact to a 2,3-bis-O-phytanyl-sn-glycerol 1-phospholipid. The FAD site is built by alanine 122 and aspartate 288. Histidine 297 provides a ligand contact to a 2,3-bis-O-phytanyl-sn-glycerol 1-phospholipid. Position 300–301 (300–301) interacts with FAD; that stretch reads GK. The cysteines at positions 310 and 335 are disulfide-linked. Tyrosine 340 contacts a 2,3-bis-O-phytanyl-sn-glycerol 1-phospholipid.

This sequence belongs to the geranylgeranyl reductase family. As to quaternary structure, monomer. FAD is required as a cofactor.

The enzyme catalyses a 2,3-bis-O-phytanyl-sn-glycerol 1-phospholipid + 8 A = a 2,3-bis-O-(geranylgeranyl)-sn-glycerol 1-phospholipid + 8 AH2. It carries out the reaction 2,3-bis-O-(phytanyl)-sn-glycerol 1-phosphate + 8 A = 2,3-bis-O-(geranylgeranyl)-sn-glycerol 1-phosphate + 8 AH2. The catalysed reaction is sn-3-O-phytanylglycerol 1-phosphate + 4 A = sn-3-O-(geranylgeranyl)glycerol 1-phosphate + 4 AH2. It catalyses the reaction phytyl diphosphate + 3 A = (2E,6E,10E)-geranylgeranyl diphosphate + 3 AH2. It functions in the pathway membrane lipid metabolism; glycerophospholipid metabolism. Its function is as follows. Is involved in the reduction of 2,3-digeranylgeranylglycerophospholipids (unsaturated archaeols) into 2,3-diphytanylglycerophospholipids (saturated archaeols) in the biosynthesis of archaeal membrane lipids. Catalyzes the formation of archaetidic acid (2,3-di-O-phytanyl-sn-glyceryl phosphate) from 2,3-di-O-geranylgeranylglyceryl phosphate (DGGGP) via the hydrogenation of each double bond of the isoprenoid chains. Is not active with NADPH or NADH as an electron donor; the physiological reducing agent is unknown. Is also active on the more upstream precursors of membrane lipid biosynthesis, catalyzing the complete reduction of 3-O-geranylgeranylglyceryl phosphate (GGGP) to 3-O-phytanylglyceryl phosphate, and the partial reduction of geranylgeranyl diphosphate (GGPP) to phytyl diphosphate, thus reducing three of four GGPP double bonds and preserving the allylic double bond (at position 2). This reaction product is a reactive prenyl donor, which can be used as a substrate by archaeal prenyltransferases such as GGGP synthases. In Sulfolobus acidocaldarius (strain ATCC 33909 / DSM 639 / JCM 8929 / NBRC 15157 / NCIMB 11770), this protein is Digeranylgeranylglycerophospholipid reductase.